The following is a 239-amino-acid chain: Probable transcriptional regulator ycf27 (239 aa).

In terms of domain architecture, Response regulatory spans 7-120; the sequence is KILVVDDEIS…ELEARIRSLL (114 aa). Residue Asp-56 is modified to 4-aspartylphosphate. The segment at residues 76 to 94 is a DNA-binding region (H-T-H motif); it reads DIPIIMLTALGDVADRITG. The ompR/PhoB-type DNA-binding region spans 135–236; the sequence is GENLQIGFLK…ARGIGYLFQN (102 aa).

It localises to the plastid. Its subcellular location is the cyanelle. Its function is as follows. Probable promoter-specific protein mediating the interaction between DNA and RNA polymerase. This is Probable transcriptional regulator ycf27 (ycf27) from Cyanophora paradoxa.